Here is a 394-residue protein sequence, read N- to C-terminus: Cell division protein FtsZ (394 aa).

GTP is bound by residues 21-25 (GGGNN), 108-110 (GTG), Glu139, Arg143, and Asp187. The segment at 317–394 (DKPSSQGRKA…EERRSRRTRR (78 aa)) is disordered. Low complexity-rich tracts occupy residues 328-346 (STGFGSSVNSSSNHQSGAS) and 353-364 (SAHTSHSQSSES). The span at 365-388 (VNERSHTTKDDDIPSFIRNREERR) shows a compositional bias: basic and acidic residues.

This sequence belongs to the FtsZ family. As to quaternary structure, homodimer. Polymerizes to form a dynamic ring structure in a strictly GTP-dependent manner. Interacts directly with several other division proteins.

It localises to the cytoplasm. Its function is as follows. Essential cell division protein that forms a contractile ring structure (Z ring) at the future cell division site. The regulation of the ring assembly controls the timing and the location of cell division. One of the functions of the FtsZ ring is to recruit other cell division proteins to the septum to produce a new cell wall between the dividing cells. Binds GTP and shows GTPase activity. This is Cell division protein FtsZ from Staphylococcus epidermidis (strain ATCC 12228 / FDA PCI 1200).